Consider the following 994-residue polypeptide: Regulator of telomere elongation helicase 1 homolog (994 aa).

Residues 15 to 324 (SKTSIKFPFE…KLIENLRTED (310 aa)) form the Helicase ATP-binding domain. 50-57 (SPTGTGKT) is a binding site for ATP. Residues C142, C160, C169, and C208 each coordinate [4Fe-4S] cluster. The DEAH box motif lies at 251 to 254 (DEAH). Positions 818 to 831 (KIEKKEKIEPRPIK) are enriched in basic and acidic residues. The disordered stretch occupies residues 818–896 (KIEKKEKIEP…HVVSGSEPPK (79 aa)). Residues 833–844 (DSSSSSVFSLPT) are compositionally biased toward polar residues. The span at 847-856 (DELKVKKWEQ) shows a compositional bias: basic and acidic residues. 2 stretches are compositionally biased toward polar residues: residues 859-869 (DSQTNVSSSSD) and 880-889 (PGNSSGQHVV).

The protein belongs to the helicase family. RAD3/XPD subfamily.

Its subcellular location is the nucleus. The catalysed reaction is ATP + H2O = ADP + phosphate + H(+). A probable ATP-dependent DNA helicase implicated in DNA repair and the maintenance of genomic stability. Acts as an anti-recombinase to counteract toxic recombination and limit crossover during meiosis. Regulates meiotic recombination and crossover homeostasis by physically dissociating strand invasion events and thereby promotes noncrossover repair by meiotic synthesis dependent strand annealing (SDSA) as well as disassembly of D loop recombination intermediates. In Caenorhabditis briggsae, this protein is Regulator of telomere elongation helicase 1 homolog.